A 166-amino-acid chain; its full sequence is RNA pyrophosphohydrolase (166 aa).

One can recognise a Nudix hydrolase domain in the interval 6–149 (GFRPNVGIIL…KRDVYRKAMM (144 aa)). A Nudix box motif is present at residues 38 to 59 (GGIHFGETPEQALYRELREEVG).

The protein belongs to the Nudix hydrolase family. RppH subfamily. A divalent metal cation is required as a cofactor.

In terms of biological role, accelerates the degradation of transcripts by removing pyrophosphate from the 5'-end of triphosphorylated RNA, leading to a more labile monophosphorylated state that can stimulate subsequent ribonuclease cleavage. The sequence is that of RNA pyrophosphohydrolase from Acinetobacter baylyi (strain ATCC 33305 / BD413 / ADP1).